Reading from the N-terminus, the 211-residue chain is N-(5'-phosphoribosyl)anthranilate isomerase (211 aa).

Belongs to the TrpF family.

It carries out the reaction N-(5-phospho-beta-D-ribosyl)anthranilate = 1-(2-carboxyphenylamino)-1-deoxy-D-ribulose 5-phosphate. Its pathway is amino-acid biosynthesis; L-tryptophan biosynthesis; L-tryptophan from chorismate: step 3/5. The protein is N-(5'-phosphoribosyl)anthranilate isomerase of Hyphomonas neptunium (strain ATCC 15444).